We begin with the raw amino-acid sequence, 152 residues long: Ribosome maturation factor RimP (152 aa).

This sequence belongs to the RimP family.

It localises to the cytoplasm. Functionally, required for maturation of 30S ribosomal subunits. This is Ribosome maturation factor RimP from Yersinia pestis.